The following is a 428-amino-acid chain: tRNA(Ile)-lysidine synthase (428 aa).

Residue 28 to 33 (SGGVDS) participates in ATP binding.

This sequence belongs to the tRNA(Ile)-lysidine synthase family.

It is found in the cytoplasm. The enzyme catalyses cytidine(34) in tRNA(Ile2) + L-lysine + ATP = lysidine(34) in tRNA(Ile2) + AMP + diphosphate + H(+). In terms of biological role, ligates lysine onto the cytidine present at position 34 of the AUA codon-specific tRNA(Ile) that contains the anticodon CAU, in an ATP-dependent manner. Cytidine is converted to lysidine, thus changing the amino acid specificity of the tRNA from methionine to isoleucine. This Streptococcus pyogenes serotype M6 (strain ATCC BAA-946 / MGAS10394) protein is tRNA(Ile)-lysidine synthase.